Reading from the N-terminus, the 802-residue chain is Leucine--tRNA ligase (802 aa).

The short motif at 40-51 (PYPSGAGLHVGH) is the 'HIGH' region element. The 'KMSKS' region motif lies at 576 to 580 (KMSKS). Position 579 (Lys-579) interacts with ATP.

This sequence belongs to the class-I aminoacyl-tRNA synthetase family.

It localises to the cytoplasm. It catalyses the reaction tRNA(Leu) + L-leucine + ATP = L-leucyl-tRNA(Leu) + AMP + diphosphate. The polypeptide is Leucine--tRNA ligase (Bacillus cereus (strain ATCC 10987 / NRS 248)).